Reading from the N-terminus, the 366-residue chain is Bacteriochlorophyll a protein (366 aa).

His110, His145, His290, His297, and His298 together coordinate bacteriochlorophyll a.

In terms of assembly, homotrimer. Each subunit contains 7 molecules of bacteriochlorophyll a.

Functionally, intermediary in the transfer of excitation energy from the chlorophyll to the reaction centers. The polypeptide is Bacteriochlorophyll a protein (Prosthecochloris aestuarii).